A 555-amino-acid chain; its full sequence is Glycerol dehydratase large subunit (555 aa).

Belongs to the diol/glycerol dehydratase large subunit family. Probably consists of three subunits: large, medium, and small. Adenosylcob(III)alamin is required as a cofactor.

It carries out the reaction glycerol = 3-hydroxypropanal + H2O. The chain is Glycerol dehydratase large subunit (dhaB) from Citrobacter freundii.